The chain runs to 226 residues: Leucyl/phenylalanyl-tRNA--protein transferase (226 aa).

Belongs to the L/F-transferase family.

Its subcellular location is the cytoplasm. The enzyme catalyses N-terminal L-lysyl-[protein] + L-leucyl-tRNA(Leu) = N-terminal L-leucyl-L-lysyl-[protein] + tRNA(Leu) + H(+). It carries out the reaction N-terminal L-arginyl-[protein] + L-leucyl-tRNA(Leu) = N-terminal L-leucyl-L-arginyl-[protein] + tRNA(Leu) + H(+). The catalysed reaction is L-phenylalanyl-tRNA(Phe) + an N-terminal L-alpha-aminoacyl-[protein] = an N-terminal L-phenylalanyl-L-alpha-aminoacyl-[protein] + tRNA(Phe). Functionally, functions in the N-end rule pathway of protein degradation where it conjugates Leu, Phe and, less efficiently, Met from aminoacyl-tRNAs to the N-termini of proteins containing an N-terminal arginine or lysine. The sequence is that of Leucyl/phenylalanyl-tRNA--protein transferase from Stutzerimonas stutzeri (strain A1501) (Pseudomonas stutzeri).